The sequence spans 214 residues: Protein-L-isoaspartate O-methyltransferase 1 (214 aa).

The active site involves S62.

This sequence belongs to the methyltransferase superfamily. L-isoaspartyl/D-aspartyl protein methyltransferase family.

The protein resides in the cytoplasm. The enzyme catalyses [protein]-L-isoaspartate + S-adenosyl-L-methionine = [protein]-L-isoaspartate alpha-methyl ester + S-adenosyl-L-homocysteine. In terms of biological role, catalyzes the methyl esterification of L-isoaspartyl residues in peptides and proteins that result from spontaneous decomposition of normal L-aspartyl and L-asparaginyl residues. It plays a role in the repair and/or degradation of damaged proteins. In Syntrophobacter fumaroxidans (strain DSM 10017 / MPOB), this protein is Protein-L-isoaspartate O-methyltransferase 1.